A 480-amino-acid chain; its full sequence is Zinc metalloproteinase/disintegrin (480 aa).

An N-terminal signal peptide occupies residues 1 to 20 (MIQVLLITICLAVFPFQGSS). The propeptide occupies 21–190 (IVLDSGNLNE…KASQLNVSPD (170 aa)). In terms of domain architecture, Peptidase M12B spans 197 to 391 (RFIKLAIYVD…HSPQCILNDP (195 aa)). N-linked (GlcNAc...) asparagine glycosylation is found at Asn259 and Asn279. Disulfide bonds link Cys308–Cys386, Cys348–Cys370, Cys350–Cys353, Cys413–Cys428, Cys415–Cys423, Cys422–Cys445, Cys436–Cys442, Cys441–Cys466, and Cys454–Cys473. His333 is a binding site for Zn(2+). Residue Glu334 is part of the active site. Residues His337 and His343 each coordinate Zn(2+). Positions 399–480 (TPVSGNELLE…AGCPRNPFHA (82 aa)) constitute a Disintegrin domain. The Cell attachment site signature appears at 458 to 460 (RGD).

The protein belongs to the venom metalloproteinase (M12B) family. P-II subfamily. P-IIa sub-subfamily. As to quaternary structure, monomer. Zn(2+) serves as cofactor. Expressed by the venom gland.

It localises to the secreted. Functionally, impairs hemostasis in the envenomed animal. Its function is as follows. Inhibits platelet aggregation and bone resorption. This chain is Zinc metalloproteinase/disintegrin, found in Gloydius halys (Chinese water mocassin).